A 55-amino-acid polypeptide reads, in one-letter code: Serine protease inhibitor Kazal-type 1 (55 aa).

Residues 2–55 form the Kazal-like domain; that stretch reads QGRDANCNYEFPGCPRNLEPVCGTDGNTYNNECLLCMENKKRDVPIRIQKDGPC. Cystine bridges form between Cys8-Cys37, Cys15-Cys34, and Cys23-Cys55.

Its subcellular location is the secreted. Its function is as follows. Serine protease inhibitor which exhibits anti-trypsin activity. In the pancreas, protects against trypsin-catalyzed premature activation of zymogens. In the male reproductive tract, binds to sperm heads where it modulates sperm capacitance by inhibiting calcium uptake and nitrogen oxide (NO) production. This Monodelphis domestica (Gray short-tailed opossum) protein is Serine protease inhibitor Kazal-type 1 (SPINK1).